The primary structure comprises 196 residues: MEKFTTHTGVGVPLTRSNVDTDQIIPAVYLKRVTRTGFEDGLFNNWRTKDPNFVLNNEAYRNGSVLVAGPDFGTGSSREHAVWALKDYGFAVVLSSRFADIFRGNAGKAGLLAAQMEQTDIELLWKQLEQTPGAQVTVSLEERTVTCEGNVYPFFVDDYTRWRLMEGLDDVGLTLRKEAEIAAFEARRPSFKPVTQ.

This sequence belongs to the LeuD family. LeuD type 1 subfamily. Heterodimer of LeuC and LeuD.

It catalyses the reaction (2R,3S)-3-isopropylmalate = (2S)-2-isopropylmalate. It participates in amino-acid biosynthesis; L-leucine biosynthesis; L-leucine from 3-methyl-2-oxobutanoate: step 2/4. Functionally, catalyzes the isomerization between 2-isopropylmalate and 3-isopropylmalate, via the formation of 2-isopropylmaleate. The protein is 3-isopropylmalate dehydratase small subunit of Corynebacterium diphtheriae (strain ATCC 700971 / NCTC 13129 / Biotype gravis).